Reading from the N-terminus, the 405-residue chain is Homocitrate synthase AksA (405 aa).

One can recognise a Pyruvate carboxyltransferase domain in the interval 23-274 (IEICDVTLRD…IERYDTTKLT (252 aa)).

This sequence belongs to the alpha-IPM synthase/homocitrate synthase family.

The catalysed reaction is acetyl-CoA + 2-oxoglutarate + H2O = (2R)-homocitrate + CoA + H(+). The enzyme catalyses 2-oxoadipate + acetyl-CoA + H2O = (R)-dihomocitrate + CoA + H(+). It catalyses the reaction 2-oxoheptanedioate + acetyl-CoA + H2O = (R)-trihomocitrate + CoA + H(+). The protein operates within organic acid metabolism; 2-oxosuberate biosynthesis. Catalyzes the condensation of alpha-ketoglutarate and acetyl-CoA to form (R)-homocitrate. Can also catalyze the condensation of alpha-ketoadipate with acetyl-CoA to form (R)-homo(2)citrate, and the condensation of alpha-ketopimelate with acetyl-CoA to form (R)-homo(3)citrate. These reactions are part of the biosynthesis pathway of coenzyme B and biotin. The sequence is that of Homocitrate synthase AksA (aksA) from Methanosarcina acetivorans (strain ATCC 35395 / DSM 2834 / JCM 12185 / C2A).